The primary structure comprises 514 residues: JmjC domain-containing histone demethylation protein 1 (514 aa).

A PHD-type zinc finger spans residues 4 to 62 (IDTCPICVESPLEDSTTFNNIAWLQCDICNQWFHASCLKIPKIEVNNLHSYHCEGCSKS). A JmjC domain is found at 220–384 (SDVDSFGKSF…MHLRIYEIEK (165 aa)). A substrate-binding site is contributed by Thr267. Fe cation contacts are provided by His270 and Asp272. Substrate is bound at residue Lys287. His352 provides a ligand contact to Fe cation. Residues 432–454 (KSEAHSRGEVHTKTETHAVKDEP) are compositionally biased toward basic and acidic residues. Residues 432 to 456 (KSEAHSRGEVHTKTETHAVKDEPQP) are disordered.

This sequence belongs to the JHDM1 histone demethylase family. The cofactor is Fe(2+).

Its subcellular location is the nucleus. It catalyses the reaction N(6),N(6)-dimethyl-L-lysyl(36)-[histone H3] + 2 2-oxoglutarate + 2 O2 = L-lysyl(36)-[histone H3] + 2 formaldehyde + 2 succinate + 2 CO2. Functionally, histone demethylase that specifically demethylates 'Lys-36' of histone H3, thereby playing a central role in histone code. This chain is JmjC domain-containing histone demethylation protein 1 (JHD1), found in Debaryomyces hansenii (strain ATCC 36239 / CBS 767 / BCRC 21394 / JCM 1990 / NBRC 0083 / IGC 2968) (Yeast).